Consider the following 92-residue polypeptide: U21-hexatoxin-Hi1a (92 aa).

An N-terminal signal peptide occupies residues 1–19 (MKTILSMLIFVALFAAIVG). Cystine bridges form between Cys41–Cys55, Cys48–Cys67, Cys54–Cys82, and Cys85–Cys92.

The protein belongs to the neurotoxin 21 family. In terms of tissue distribution, expressed by the venom gland.

It localises to the secreted. Potent insecticidal toxin with probable ion channel impairing activity. In vivo, reversibly paralyzes all flies within 30 minutes, even at low dose (0.3 nmol/g). In Hadronyche infensa (Fraser island funnel-web spider), this protein is U21-hexatoxin-Hi1a.